We begin with the raw amino-acid sequence, 405 residues long: MNFGTLADIETRGKTVLVRVDFNSPIDPSSNTILDDKRFREHIPTLQALEDARVVVLAHQSRPGKKDFTTLAAHADKLERLMNMPVTYVDDIFGTCAKHAVRDAHPGDIVLLENVRFSAEENLTMKPEDGAKTHLVRKLASMADLFVYDAFGTAHRSQPTITGLSYAMKTVAGLLMEKEVSMLSRVFTSAPKPVTFVLGGTKVDDSIAVAGNVLANKTADKVAIIGVVANVFYLAKGIDIGEPSRNLIHMLGYDDEVAKAKTILDSYPDKVLLPEYVAVKEHDERKEYPITRVPKDCPILDMGTESIVQFSKALRNSGSIVFNGPAGVFEEAKFASGTFELLRAAANVDFSVCGGGHTAAVIEQLGLEPQYSHLSTGGGACIEFLTGKKLPAIAALEESWKKFGN.

Substrate is bound by residues 21-23 (DFN), R38, 59-62 (HQSR), R116, and R156. ATP contacts are provided by residues E330 and 355–358 (GGHT).

It belongs to the phosphoglycerate kinase family. Monomer.

The protein resides in the cytoplasm. The enzyme catalyses (2R)-3-phosphoglycerate + ATP = (2R)-3-phospho-glyceroyl phosphate + ADP. The protein operates within carbohydrate degradation; glycolysis; pyruvate from D-glyceraldehyde 3-phosphate: step 2/5. This Methanocorpusculum labreanum (strain ATCC 43576 / DSM 4855 / Z) protein is Phosphoglycerate kinase.